Reading from the N-terminus, the 478-residue chain is Glutamate--tRNA ligase (478 aa).

Positions 9–19 (PSPTGLLHIGT) match the 'HIGH' region motif. A 'KMSKS' region motif is present at residues 248-252 (KLSKR). Lys251 is an ATP binding site.

It belongs to the class-I aminoacyl-tRNA synthetase family. Glutamate--tRNA ligase type 1 subfamily. Monomer.

It localises to the cytoplasm. It catalyses the reaction tRNA(Glu) + L-glutamate + ATP = L-glutamyl-tRNA(Glu) + AMP + diphosphate. In terms of biological role, catalyzes the attachment of glutamate to tRNA(Glu) in a two-step reaction: glutamate is first activated by ATP to form Glu-AMP and then transferred to the acceptor end of tRNA(Glu). The protein is Glutamate--tRNA ligase of Prochlorococcus marinus (strain MIT 9515).